The following is a 343-amino-acid chain: tRNA N6-adenosine threonylcarbamoyltransferase (343 aa).

Residues His115 and His119 each coordinate Fe cation. Substrate-binding positions include 137-141 (IVSGG), Asp170, Gly183, Asp187, and Asn276. Asp304 contacts Fe cation.

This sequence belongs to the KAE1 / TsaD family. Requires Fe(2+) as cofactor.

It localises to the cytoplasm. The enzyme catalyses L-threonylcarbamoyladenylate + adenosine(37) in tRNA = N(6)-L-threonylcarbamoyladenosine(37) in tRNA + AMP + H(+). Its function is as follows. Required for the formation of a threonylcarbamoyl group on adenosine at position 37 (t(6)A37) in tRNAs that read codons beginning with adenine. Is involved in the transfer of the threonylcarbamoyl moiety of threonylcarbamoyl-AMP (TC-AMP) to the N6 group of A37, together with TsaE and TsaB. TsaD likely plays a direct catalytic role in this reaction. The polypeptide is tRNA N6-adenosine threonylcarbamoyltransferase (Staphylococcus carnosus (strain TM300)).